We begin with the raw amino-acid sequence, 823 residues long: Protein Shroom1 (823 aa).

Position 1 is an N-acetylmethionine (Met1). Disordered regions lie at residues 1–55 (MEAL…TERL), 72–110 (PTSKDAVLSTTQRPVQAVAGHSDPRSPEVQGSPGPLNRQ), and 124–159 (ATAHTAEPPSPPASRDAYRQRLQGAQRRVLRETSFQ). Composition is skewed to polar residues over residues 28-50 (RADSAYSSFSTASGDPETRTPSP) and 72-85 (PTSKDAVLSTTQRP). Phosphoserine is present on residues Ser103, Ser133, Ser137, Ser166, Ser190, and Ser224. The ASD1 domain occupies 145-233 (LQGAQRRVLR…SEPGKLHRVG (89 aa)). A disordered region spans residues 181–200 (TAHVRSASSSQELGEEEPAR). 2 disordered regions span residues 270 to 303 (SSTELNSGPADLGNAHRPAGRSQSVSGEVMGPCK) and 349 to 375 (QTKPAGCGRRISETSVSTPGPSLPEDD). Residue Thr383 is modified to Phosphothreonine. A Phosphoserine modification is found at Ser385. Disordered stretches follow at residues 420 to 503 (LHET…LTWG) and 566 to 620 (EMGE…STQA). Composition is skewed to polar residues over residues 444–468 (RPTSIPETTNDDIPTFDTNGTTDPS), 489–503 (SETPGSPHHTSLTWG), and 586–620 (QDLQTSQEASRSENSTPDPDQSSGQEFPEGNSTQA). One can recognise an ASD2 domain in the interval 517-796 (EALVQELARL…QLDTIWSDLS (280 aa)).

This sequence belongs to the shroom family. Interacts with F-actin.

The protein localises to the cytoplasm. It localises to the cytoskeleton. Its function is as follows. May be involved in the assembly of microtubule arrays during cell elongation. The sequence is that of Protein Shroom1 (Shroom1) from Mus musculus (Mouse).